Here is a 275-residue protein sequence, read N- to C-terminus: Ditrans,polycis-undecaprenyl-diphosphate synthase ((2E,6E)-farnesyl-diphosphate specific) (275 aa).

D45 is an active-site residue. Mg(2+) is bound at residue D45. Residues 46–49, W50, R58, H62, and 90–92 contribute to the substrate site; these read GNGR and SSE. N93 serves as the catalytic Proton acceptor. Residues W94, R96, R213, and 219-221 each bind substrate; that span reads RIS. E232 provides a ligand contact to Mg(2+).

This sequence belongs to the UPP synthase family. In terms of assembly, homodimer. Mg(2+) serves as cofactor.

It carries out the reaction 8 isopentenyl diphosphate + (2E,6E)-farnesyl diphosphate = di-trans,octa-cis-undecaprenyl diphosphate + 8 diphosphate. Its function is as follows. Catalyzes the sequential condensation of isopentenyl diphosphate (IPP) with (2E,6E)-farnesyl diphosphate (E,E-FPP) to yield (2Z,6Z,10Z,14Z,18Z,22Z,26Z,30Z,34E,38E)-undecaprenyl diphosphate (di-trans,octa-cis-UPP). UPP is the precursor of glycosyl carrier lipid in the biosynthesis of bacterial cell wall polysaccharide components such as peptidoglycan and lipopolysaccharide. The polypeptide is Ditrans,polycis-undecaprenyl-diphosphate synthase ((2E,6E)-farnesyl-diphosphate specific) (Shewanella oneidensis (strain ATCC 700550 / JCM 31522 / CIP 106686 / LMG 19005 / NCIMB 14063 / MR-1)).